The primary structure comprises 256 residues: Alcohol dehydrogenase (256 aa).

12–35 lines the NAD(+) pocket; it reads FVAGLGGIGLDTSKELVKRDLKNL. Ser140 lines the substrate pocket. Tyr153 (proton acceptor) is an active-site residue.

This sequence belongs to the short-chain dehydrogenases/reductases (SDR) family. In terms of assembly, homodimer.

It carries out the reaction a primary alcohol + NAD(+) = an aldehyde + NADH + H(+). The enzyme catalyses a secondary alcohol + NAD(+) = a ketone + NADH + H(+). This Drosophila orena (Fruit fly) protein is Alcohol dehydrogenase (Adh).